The sequence spans 363 residues: Early boundary activity protein 1 (363 aa).

Residues 155-168 (MDQEPEHKQSHEQD) are compositionally biased toward basic and acidic residues. The segment at 155–242 (MDQEPEHKQS…NAKRRCPGFE (88 aa)) is disordered. Residues 198-209 (EDLGLDDDDEDY) are compositionally biased toward acidic residues. The BEN domain occupies 255 to 354 (GPNGTEVSRI…TKCADENKML (100 aa)).

In terms of assembly, the heterotrimeric Elba complex consists of Elba1, Elba2 and Elba3.

The protein localises to the nucleus. Its function is as follows. The heterotrimeric Elba complex is required for chromatin domain boundary function during early embryogenesis. It binds to a 8-bp sequence 5'-CCAATAAG-3' in the Fab-7 insulator or boundary element in the bithorax complex and contributes to its insulator or boundary activity. Elba1 may act as a transcriptional repressor and binds the palindromic sequence 5'-CCAATTGG-3' to mediate transcriptional repression. This is Early boundary activity protein 1 from Drosophila melanogaster (Fruit fly).